Reading from the N-terminus, the 406-residue chain is Tryptophan synthase beta chain (406 aa).

K99 is subject to N6-(pyridoxal phosphate)lysine.

It belongs to the TrpB family. Tetramer of two alpha and two beta chains. The cofactor is pyridoxal 5'-phosphate.

The catalysed reaction is (1S,2R)-1-C-(indol-3-yl)glycerol 3-phosphate + L-serine = D-glyceraldehyde 3-phosphate + L-tryptophan + H2O. It functions in the pathway amino-acid biosynthesis; L-tryptophan biosynthesis; L-tryptophan from chorismate: step 5/5. In terms of biological role, the beta subunit is responsible for the synthesis of L-tryptophan from indole and L-serine. The protein is Tryptophan synthase beta chain of Rhizobium etli (strain CIAT 652).